The primary structure comprises 332 residues: L-lactate dehydrogenase A chain (332 aa).

NAD(+)-binding positions include 29–57 (GAVG…IEDK) and arginine 99. Residues arginine 106, asparagine 138, and arginine 169 each contribute to the substrate site. Residue asparagine 138 participates in NAD(+) binding. Residue histidine 193 is the Proton acceptor of the active site. Substrate is bound at residue threonine 248.

This sequence belongs to the LDH/MDH superfamily. LDH family. In terms of assembly, homotetramer.

It is found in the cytoplasm. It catalyses the reaction (S)-lactate + NAD(+) = pyruvate + NADH + H(+). Its pathway is fermentation; pyruvate fermentation to lactate; (S)-lactate from pyruvate: step 1/1. In terms of biological role, interconverts simultaneously and stereospecifically pyruvate and lactate with concomitant interconversion of NADH and NAD(+). In Pelodiscus sinensis japonicus (Chinese soft-shelled turtle), this protein is L-lactate dehydrogenase A chain (LDHA).